Consider the following 479-residue polypeptide: Ribosomal RNA small subunit methyltransferase F (479 aa).

Residues 125–131, E149, D176, and D194 each bind S-adenosyl-L-methionine; that span reads AAAPGSK. The Nucleophile role is filled by C247.

Belongs to the class I-like SAM-binding methyltransferase superfamily. RsmB/NOP family.

It localises to the cytoplasm. The enzyme catalyses cytidine(1407) in 16S rRNA + S-adenosyl-L-methionine = 5-methylcytidine(1407) in 16S rRNA + S-adenosyl-L-homocysteine + H(+). Its function is as follows. Specifically methylates the cytosine at position 1407 (m5C1407) of 16S rRNA. The protein is Ribosomal RNA small subunit methyltransferase F of Salmonella typhi.